The chain runs to 414 residues: Arrestin domain-containing protein 3 (414 aa).

2 short sequence motifs (PPxY motif) span residues 346–349 (PPSY) and 391–394 (PPLY). A disordered region spans residues 393-414 (LYSEIDPNPDQSSEDRPSCPSR). Over residues 405–414 (SEDRPSCPSR) the composition is skewed to basic and acidic residues.

The protein belongs to the arrestin family. As to quaternary structure, interacts (via PPxY motifs) with NEDD4 (via WW domains). Interacts with ADRB2. Interacts with ADRB3. Interacts with HGS (via PPxY motifs). Does not bind TXN (thioredoxin). Interacts with ITCH. As to expression, detected in visceral fat, subcutaneous fat, brown fat and skeletal muscle, and at lower levels in kidney.

It is found in the cytoplasm. Its subcellular location is the cell membrane. The protein localises to the lysosome. The protein resides in the endosome. It localises to the early endosome. Functionally, adapter protein that plays a role in regulating cell-surface expression of adrenergic receptors and probably also other G protein-coupled receptors. Plays a role in NEDD4-mediated ubiquitination and endocytosis af activated ADRB2 and subsequent ADRB2 degradation. May recruit NEDD4 to ADRB2. Alternatively, may function as adapter protein that does not play a major role in recruiting NEDD4 to ADRB2, but rather plays a role in a targeting ADRB2 to endosomes. This Mus musculus (Mouse) protein is Arrestin domain-containing protein 3 (Arrdc3).